Reading from the N-terminus, the 294-residue chain is Foldase protein PrsA 1 (294 aa).

Residues 1-21 form the signal peptide; sequence MTKLKKVMISVIAATLLLLAG. Residue cysteine 22 is the site of N-palmitoyl cysteine attachment. A lipid anchor (S-diacylglycerol cysteine) is attached at cysteine 22. Positions 135-226 constitute a PpiC domain; it reads EPDITVRHIL…YGYHLIQLVK (92 aa).

The protein belongs to the PrsA family.

The protein resides in the cell membrane. It carries out the reaction [protein]-peptidylproline (omega=180) = [protein]-peptidylproline (omega=0). Its function is as follows. Plays a major role in protein secretion by helping the post-translocational extracellular folding of several secreted proteins. The protein is Foldase protein PrsA 1 (prsA1) of Listeria monocytogenes serovar 1/2a (strain ATCC BAA-679 / EGD-e).